The primary structure comprises 438 residues: Aspartate--tRNA(Asp) ligase (438 aa).

An L-aspartate-binding site is contributed by glutamate 170. Positions 192-195 (QLYK) are aspartate. Position 214 (arginine 214) interacts with L-aspartate. Residues 214 to 216 (RAE), 222 to 224 (RHL), and glutamate 361 contribute to the ATP site. Residues glutamate 361 and serine 364 each coordinate Mg(2+). Positions 364 and 368 each coordinate L-aspartate. 409–412 (GAER) provides a ligand contact to ATP.

It belongs to the class-II aminoacyl-tRNA synthetase family. Type 2 subfamily. Homodimer. The cofactor is Mg(2+).

Its subcellular location is the cytoplasm. The catalysed reaction is tRNA(Asp) + L-aspartate + ATP = L-aspartyl-tRNA(Asp) + AMP + diphosphate. Catalyzes the attachment of L-aspartate to tRNA(Asp) in a two-step reaction: L-aspartate is first activated by ATP to form Asp-AMP and then transferred to the acceptor end of tRNA(Asp). The sequence is that of Aspartate--tRNA(Asp) ligase from Pyrococcus abyssi (strain GE5 / Orsay).